The sequence spans 1967 residues: RQC trigger complex helicase SLH1 (1967 aa).

Residues 297 to 485 form the Helicase ATP-binding 1 domain; sequence PVAYKTNENM…FLGVNRQIGM (189 aa). An ATP-binding site is contributed by 310-317; it reads APTGAGKT. Positions 427-430 match the DEVH box motif; the sequence is DEVH. The region spanning 516–735 is the Helicase C-terminal 1 domain; the sequence is NIDKVAYDKL…NVDEAIEWLG (220 aa). Residues 795–1100 enclose the SEC63 1 domain; it reads AKDLGRVSSD…GCESTHAISF (306 aa). A Helicase ATP-binding 2 domain is found at 1149 to 1324; sequence YTLYNTNENA…WLGVKDHGLY (176 aa). 1162-1169 contributes to the ATP binding site; that stretch reads SPTGSGKT. Positions 1266-1269 match the DEAH box motif; that stretch reads DEIH. One can recognise a Helicase C-terminal 2 domain in the interval 1355-1550; that stretch reads MNKPVFMAIK…SLHKVLDDHL (196 aa). One can recognise an SEC63 2 domain in the interval 1626 to 1776; it reads ATPFLSISSY…MMQCIKQGYW (151 aa).

Belongs to the helicase family. SKI2 subfamily. As to quaternary structure, component of the RQT (ribosome quality control trigger) complex, composed of SLH1, CUE3, and RQT4. Interacts with CUE3. Interacts with RQT4. Interacts with HEL2. Associates with translating ribosomes.

The protein resides in the cytoplasm. It localises to the cytosol. It carries out the reaction ATP + H2O = ADP + phosphate + H(+). In terms of biological role, involved in activation of the ribosome quality control (RQC) pathway, a pathway that degrades nascent peptide chains during problematic translation. Drives the splitting of stalled ribosomes that are polyubiquitinated in a HEL2-dependent manner, as part of the ribosome quality control trigger (RQT) complex. Also represses the translation of non-poly(A) mRNAs together with SKI2. May block translation by inhibiting translation initiation factor 5B (FUN12) action on mRNAs lacking a 3' poly(A) structure. Involved in antiviral defense, preventing L-A dsRNA virus propagation by specifically blocking translation of viral mRNAs. This is RQC trigger complex helicase SLH1 from Saccharomyces cerevisiae (strain ATCC 204508 / S288c) (Baker's yeast).